The primary structure comprises 248 residues: Carbohydrate deacetylase 2 (248 aa).

Residues H59 and H123 each contribute to the Mg(2+) site.

Belongs to the YdjC deacetylase family. As to quaternary structure, homodimer. Requires Mg(2+) as cofactor.

Functionally, probably catalyzes the deacetylation of acetylated carbohydrates an important step in the degradation of oligosaccharides. The protein is Carbohydrate deacetylase 2 of Listeria innocua serovar 6a (strain ATCC BAA-680 / CLIP 11262).